The primary structure comprises 465 residues: UDP-N-acetylmuramate--L-alanine ligase (465 aa).

115–121 contributes to the ATP binding site; it reads GAHGKTT.

It belongs to the MurCDEF family.

It is found in the cytoplasm. It catalyses the reaction UDP-N-acetyl-alpha-D-muramate + L-alanine + ATP = UDP-N-acetyl-alpha-D-muramoyl-L-alanine + ADP + phosphate + H(+). Its pathway is cell wall biogenesis; peptidoglycan biosynthesis. In terms of biological role, cell wall formation. This chain is UDP-N-acetylmuramate--L-alanine ligase, found in Coxiella burnetii (strain Dugway 5J108-111).